A 511-amino-acid polypeptide reads, in one-letter code: 2,3-bisphosphoglycerate-independent phosphoglycerate mutase (511 aa).

Positions 12 and 62 each coordinate Mn(2+). Ser-62 (phosphoserine intermediate) is an active-site residue. Substrate-binding positions include His-123, 153–154 (RD), Arg-185, Arg-191, 260–263 (RPDR), and Lys-335. Mn(2+) is bound by residues Asp-402, His-406, Asp-443, His-444, and His-462.

The protein belongs to the BPG-independent phosphoglycerate mutase family. As to quaternary structure, monomer. The cofactor is Mn(2+).

The enzyme catalyses (2R)-2-phosphoglycerate = (2R)-3-phosphoglycerate. It functions in the pathway carbohydrate degradation; glycolysis; pyruvate from D-glyceraldehyde 3-phosphate: step 3/5. Its function is as follows. Catalyzes the interconversion of 2-phosphoglycerate and 3-phosphoglycerate. In Acetivibrio thermocellus (strain ATCC 27405 / DSM 1237 / JCM 9322 / NBRC 103400 / NCIMB 10682 / NRRL B-4536 / VPI 7372) (Clostridium thermocellum), this protein is 2,3-bisphosphoglycerate-independent phosphoglycerate mutase.